The following is an 857-amino-acid chain: MKTKMMMKNTSLIFVLLFITFFFTSISYSLSLTFNGDLSDNEVRLITQRQLLYFRDEFGDRGENVDVDPSLVFENPRLRNAYIALQAWKQAILSDPNNFTTNWIGSDVCSYTGVYCAPALDNRRIRTVAGIDLNHADIAGYLPQELGLLTDLALFHINSNRFCGTVPHRFNRLKLLFELDLSNNRFAGIFPTVVLQLPSLKFLDLRFNEFEGPVPRELFSKDLDAIFINHNRFRFELPDNLGDSPVSVIVVANNHFHGCIPTSLGDMRNLEEIIFMENGFNSCLPSQIGRLKNVTVFDFSFNELVGSLPASIGGMVSMEQLNVAHNRFSGKIPATICQLPRLENFTFSYNFFTGEPPVCLGLPGFDDRRNCLPARPAQRSPGQCAAFSSLPPVDCGSFGCGRSTRPPVVVPSPPTTPSPGGSPPSPSISPSPPITVPSPPTTPSPGGSPPSPSIVPSPPSTTPSPGSPPTSPTTPTPGGSPPSSPTTPTPGGSPPSSPTTPTPGGSPPSSPTTPSPGGSPPSPSISPSPPITVPSPPSTPTSPGSPPSPSSPTPSSPIPSPPTPSTPPTPISPGQNSPPIIPSPPFTGPSPPSSPSPPLPPVIPSPPIVGPTPSSPPPSTPTPVYSPPPPSTGYPPPPPFTGYSPPSPPPPPPPTFSPSPSIPPPPPQTYSPFPPPPPPPPQTYYPPQPSPSQPPQSPIYGTPPPSPIPYLPSPPQFASPPPPAPYYYSSPQPPPPPHYSLPPPTPTYHYISPPPPPTPIHSPPPQSHPPCIEYSPPPPPTVHYNPPPPPSPAHYSPPPSPPVYYYNSPPPPPAVHYSPPPPPVIHHSQPPPPPIYEGPLPPIPGISYASPPPPPFY.

Residues 1–31 form the signal peptide; sequence MKTKMMMKNTSLIFVLLFITFFFTSISYSLS. The stretch at 32 to 53 is one LRR 1 repeat; that stretch reads LTFNGDLSDNEVRLITQRQLLY. Residue asparagine 98 is glycosylated (N-linked (GlcNAc...) asparagine). LRR repeat units lie at residues 125 to 149, 150 to 172, 174 to 197, 198 to 221, 223 to 244, 246 to 267, 268 to 291, 292 to 315, 316 to 339, and 341 to 362; these read IRTV…LGLL, TDLA…RFNR, KLLF…VLQL, PSLK…LFSK, LDAI…LGDS, VSVI…LGDM, RNLE…IGRL, KNVT…IGGM, VSME…ICQL, and RLEN…CLGL. Asparagine 293 carries N-linked (GlcNAc...) asparagine glycosylation. Asparagine 344 carries an N-linked (GlcNAc...) asparagine glycan. Disordered regions lie at residues 406–776 and 817–839; these read PPVV…EYSP and YSPP…YEGP. Composition is skewed to pro residues over residues 408 to 571 and 579 to 768; these read VVVP…PTPI and PIIP…PQSH. Residues 615–857 are contains the Ser-Pro(4) repeats; sequence SPPPSTPTPV…YASPPPPPFY (243 aa).

Hydroxylated on proline residues in the S-P-P-P-P repeat. Post-translationally, O-glycosylated on hydroxyprolines. In terms of tissue distribution, expressed in roots, leaves and flowers.

It localises to the secreted. It is found in the cell wall. Modulates cell morphogenesis by regulating cell wall formation and assembly, and/or growth polarization. The sequence is that of Leucine-rich repeat extensin-like protein 5 (LRX5) from Arabidopsis thaliana (Mouse-ear cress).